Here is a 199-residue protein sequence, read N- to C-terminus: Outer-membrane lipoprotein LolB (199 aa).

The first 28 residues, 1 to 28 (MSACPAPRSPVRWLHAFTLFLLLAVLAG), serve as a signal peptide directing secretion. A lipid anchor (N-palmitoyl cysteine) is attached at C29. A lipid anchor (S-diacylglycerol cysteine) is attached at C29.

It belongs to the LolB family. Monomer.

Its subcellular location is the cell outer membrane. In terms of biological role, plays a critical role in the incorporation of lipoproteins in the outer membrane after they are released by the LolA protein. In Bordetella pertussis (strain Tohama I / ATCC BAA-589 / NCTC 13251), this protein is Outer-membrane lipoprotein LolB.